Here is a 715-residue protein sequence, read N- to C-terminus: Palmitoyltransferase ZDHHC5 (715 aa).

The Cytoplasmic segment spans residues M1–K13. The chain crosses the membrane as a helical span at residues Y14–F34. Topologically, residues T35–G38 are extracellular. A helical membrane pass occupies residues L39–L59. Over A60–Y148 the chain is Cytoplasmic. A Phosphotyrosine modification is found at Y91. The DHHC domain occupies K104–L154. The active-site S-palmitoyl cysteine intermediate is C134. Residues F149–L169 traverse the membrane as a helical segment. Residues Y170–C191 are Extracellular-facing. Residues V192 to A212 form a helical membrane-spanning segment. Residues R213–V715 lie on the Cytoplasmic side of the membrane. 3 positions are modified to phosphoserine: S247, S296, and S299. Positions G289–E648 are disordered. T303 carries the post-translational modification Phosphothreonine. S345 carries the phosphoserine modification. T348 and T350 each carry phosphothreonine. Residues S359–A373 are compositionally biased toward low complexity. 4 positions are modified to phosphoserine: S380, S398, S406, and S409. T411 is modified (phosphothreonine). A phosphoserine mark is found at S415, S425, S429, and S432. The span at S422–S432 shows a compositional bias: low complexity. T436 carries the post-translational modification Phosphothreonine. The segment covering Q442–D478 has biased composition (polar residues). S529 and S554 each carry phosphoserine. R617 is modified (omega-N-methylarginine). S621 bears the Phosphoserine mark. T659 carries the post-translational modification Phosphothreonine. The segment at L666–V715 is disordered. Residues T668 to S679 show a composition bias toward polar residues. The segment covering G681 to P695 has biased composition (low complexity). 2 positions are modified to phosphoserine: S684 and S694. R697 carries the omega-N-methylarginine modification.

The protein belongs to the DHHC palmitoyltransferase family. ERF2/ZDHHC9 subfamily. Post-translationally, phosphorylation regulates association with endocytic proteins and its subcellular localization. Phosphorylation by LYN during fatty acid uptake leads to inactivation of the activity. In terms of processing, autopalmitoylated. Palmitoylation of the C-terminal tail regulates stimulation-dependent plasma membrane motility.

Its subcellular location is the cell membrane. The catalysed reaction is L-cysteinyl-[protein] + hexadecanoyl-CoA = S-hexadecanoyl-L-cysteinyl-[protein] + CoA. Its function is as follows. Palmitoyltransferase that catalyzes the addition of palmitate onto various protein substrates such as CTNND2, CD36, GSDMD, NLRP3, NOD1, NOD2, STAT3 and S1PR1 thus plays a role in various biological processes including cell adhesion, inflammation, fatty acid uptake, bacterial sensing or cardiac functions. Plays an important role in the regulation of synapse efficacy by mediating palmitoylation of delta-catenin/CTNND2, thereby increasing synaptic delivery and surface stabilization of alpha-amino-3-hydroxy-5-methyl-4-isoxazole propionic acid receptors (AMPARs). Under basal conditions, remains at the synaptic membrane through FYN-mediated phosphorylation that prevents association with endocytic proteins. Neuronal activity enhances the internalization and trafficking of DHHC5 from spines to dendritic shafts where it palmitoylates delta-catenin/CTNND2. Regulates cell adhesion at the plasma membrane by palmitoylating GOLGA7B and DSG2. Plays a role in innate immune response by mediating the palmitoylation of NOD1 and NOD2 and their proper recruitment to the bacterial entry site and phagosomes. Also participates in fatty acid uptake by palmitoylating CD36 and thereby targeting it to the plasma membrane. Upon binding of fatty acids to CD36, gets phosphorylated by LYN leading to inactivation and subsequent CD36 caveolar endocytosis. Controls oligodendrocyte development by catalyzing STAT3 palmitoylation. Acts as a regulator of inflammatory response by mediating palmitoylation of NLRP3 and GSDMD. Palmitoylates NLRP3 to promote inflammasome assembly and activation. Activates pyroptosis by catalyzing palmitoylation of gasdermin-D (GSDMD), thereby promoting membrane translocation and pore formation of GSDMD. This is Palmitoyltransferase ZDHHC5 (ZDHHC5) from Canis lupus familiaris (Dog).